Here is a 623-residue protein sequence, read N- to C-terminus: ATP-dependent zinc metalloprotease FtsH (623 aa).

Residues 1 to 7 are Cytoplasmic-facing; that stretch reads MNQSFWR. The helical transmembrane segment at 8 to 28 threads the bilayer; it reads PLFAILLFMLVFHLTNIFFAQ. Residues 29-117 lie on the Periplasmic side of the membrane; that stretch reads QGAQVAQISY…EVSALSTETP (89 aa). A helical transmembrane segment spans residues 118-138; that stretch reads LLLNALIYVAPWVILIAIWWV. Residues 139-623 lie on the Cytoplasmic side of the membrane; the sequence is GMRSMRSQGP…SLNTAQAPPP (485 aa). Residue 214–221 coordinates ATP; that stretch reads GPPGTGKT. Histidine 435 contacts Zn(2+). Glutamate 436 is an active-site residue. Zn(2+)-binding residues include histidine 439 and aspartate 511.

This sequence in the central section; belongs to the AAA ATPase family. In the C-terminal section; belongs to the peptidase M41 family. Homohexamer. The cofactor is Zn(2+).

It is found in the cell inner membrane. In terms of biological role, acts as a processive, ATP-dependent zinc metallopeptidase for both cytoplasmic and membrane proteins. Plays a role in the quality control of integral membrane proteins. This chain is ATP-dependent zinc metalloprotease FtsH, found in Pelobacter propionicus (strain DSM 2379 / NBRC 103807 / OttBd1).